The sequence spans 130 residues: Small ribosomal subunit protein uS8 (130 aa).

This sequence belongs to the universal ribosomal protein uS8 family.

The protein localises to the cytoplasm. This is Small ribosomal subunit protein uS8 (RPS15A) from Daucus carota (Wild carrot).